The sequence spans 355 residues: UDP-N-acetylglucosamine--N-acetylmuramyl-(pentapeptide) pyrophosphoryl-undecaprenol N-acetylglucosamine transferase (355 aa).

Residues 14–16 (TGG), N126, R162, S190, I243, 262–267 (ALTVSE), and Q287 contribute to the UDP-N-acetyl-alpha-D-glucosamine site.

It belongs to the glycosyltransferase 28 family. MurG subfamily.

It is found in the cell inner membrane. It carries out the reaction di-trans,octa-cis-undecaprenyl diphospho-N-acetyl-alpha-D-muramoyl-L-alanyl-D-glutamyl-meso-2,6-diaminopimeloyl-D-alanyl-D-alanine + UDP-N-acetyl-alpha-D-glucosamine = di-trans,octa-cis-undecaprenyl diphospho-[N-acetyl-alpha-D-glucosaminyl-(1-&gt;4)]-N-acetyl-alpha-D-muramoyl-L-alanyl-D-glutamyl-meso-2,6-diaminopimeloyl-D-alanyl-D-alanine + UDP + H(+). Its pathway is cell wall biogenesis; peptidoglycan biosynthesis. In terms of biological role, cell wall formation. Catalyzes the transfer of a GlcNAc subunit on undecaprenyl-pyrophosphoryl-MurNAc-pentapeptide (lipid intermediate I) to form undecaprenyl-pyrophosphoryl-MurNAc-(pentapeptide)GlcNAc (lipid intermediate II). The chain is UDP-N-acetylglucosamine--N-acetylmuramyl-(pentapeptide) pyrophosphoryl-undecaprenol N-acetylglucosamine transferase from Vibrio campbellii (strain ATCC BAA-1116).